A 240-amino-acid chain; its full sequence is Ribosomal RNA small subunit methyltransferase G (240 aa).

Residues G79, F84, 130–131 (AE), and R149 each bind S-adenosyl-L-methionine.

Belongs to the methyltransferase superfamily. RNA methyltransferase RsmG family.

It localises to the cytoplasm. Functionally, specifically methylates the N7 position of a guanine in 16S rRNA. The sequence is that of Ribosomal RNA small subunit methyltransferase G from Lactobacillus acidophilus (strain ATCC 700396 / NCK56 / N2 / NCFM).